A 215-amino-acid chain; its full sequence is Ras-related protein Rab-5A (215 aa).

GTP-binding residues include Ser29, Ala30, Gly32, Lys33, Ser34, Ser35, His46, Glu47, Thr52, and Gly78. Ser34 is a binding site for Mg(2+). 2 short sequence motifs (switch) span residues 44 to 56 (QFHE…IGAA) and 77 to 93 (AGQE…YRGA). Residue Thr52 coordinates Mg(2+). The residue at position 84 (Ser84) is a Phosphoserine; by LRRK2. A (Microbial infection) N-beta-linked (GlcNAc) arginine glycan is attached at Arg120. Positions 133, 134, 136, 164, and 165 each coordinate GTP. The disordered stretch occupies residues 181-215 (LPKNEPQNPGANSARGRGVDLTEPTQPTRNQCCSN). Positions 203–215 (EPTQPTRNQCCSN) are enriched in polar residues. 2 S-geranylgeranyl cysteine lipidation sites follow: Cys212 and Cys213.

This sequence belongs to the small GTPase superfamily. Rab family. Interacts with SGSM1 and SGSM3. Interacts with PIK3CB. Interacts with GDI1; this promotes dissociation from membranes; phosphorylation at Ser-84 disrupts this interaction. Interacts with GDI2; phosphorylation at Ser-84 disrupts the interaction. Interacts with EEA1. Interacts with RIN1 and GAPVD1, which regulate its pathway, probably by acting as a GEF. Interacts with RINL. Interacts with ALS2CL, SUN2, ZFYVE20 and RUFY1. Interacts with RABEP1; one RABEP1 homodimer binds two RAB5A chains, but at opposite sides of the dimer. Interacts with OCRL. Interacts with INPP5F. May be a component of a complex composed of RAB5A, DYN2 and PIK3C3. Does not interact with BLOC-3 complex (heterodimer of HPS1 and HPS4). Interacts with CLN5. Interacts with APPL2. Interacts with F8A1/F8A2/F8A3. Found in a complex with F8A1/F8A2/F8A3, HTT and RAB5A; mediates the recruitment of HTT by RAB5A onto early endosomes. Interacts with ATP9A. Interacts with PPP1R21; mediates the recruitment of FERRY complex by RAB5A onto early endosomes. Mg(2+) serves as cofactor. Post-translationally, phosphorylation of Ser-84 in the switch II region by LRRK2 prevents the association of RAB regulatory proteins, including RAB GDP dissociation inhibitors GDI1 and GDI2. (Microbial infection) Glycosylated on arginine residues by S.typhimurium protein Ssek3.

The protein resides in the cell membrane. Its subcellular location is the early endosome membrane. The protein localises to the melanosome. It is found in the cytoplasmic vesicle. It localises to the cell projection. The protein resides in the ruffle. Its subcellular location is the membrane. The protein localises to the cytoplasm. It is found in the cytosol. It localises to the phagosome membrane. The protein resides in the endosome membrane. It catalyses the reaction GTP + H2O = GDP + phosphate + H(+). Regulated by guanine nucleotide exchange factors (GEFs) including RINL, which promote the exchange of bound GDP for free GTP. Regulated by GTPase activating proteins (GAPs) which increase the GTP hydrolysis activity. Inhibited by GDP dissociation inhibitors (GDIs). Functionally, the small GTPases Rab are key regulators of intracellular membrane trafficking, from the formation of transport vesicles to their fusion with membranes. Rabs cycle between an inactive GDP-bound form and an active GTP-bound form that is able to recruit to membranes different sets of downstream effectors directly responsible for vesicle formation, movement, tethering and fusion. RAB5A is required for the fusion of plasma membranes and early endosomes. Contributes to the regulation of filopodia extension. Required for the exosomal release of SDCBP, CD63, PDCD6IP and syndecan. Regulates maturation of apoptotic cell-containing phagosomes, probably downstream of DYN2 and PIK3C3. The protein is Ras-related protein Rab-5A of Homo sapiens (Human).